We begin with the raw amino-acid sequence, 495 residues long: SH2 domain-containing adapter protein E (495 aa).

Disordered regions lie at residues 51 to 190 (TVSE…DKGK), 203 to 233 (DYAD…EPYD), and 256 to 327 (LLDS…EYEQ). Residue serine 107 is modified to Phosphoserine. The segment covering 135–144 (TKSSGCSTYI) has biased composition (polar residues). A compositionally biased stretch (basic and acidic residues) spans 148 to 157 (IKVDTQEKNG). Residues 162 to 181 (PSSSSSSSSSSSSASSSPSS) show a composition bias toward low complexity. 2 stretches are compositionally biased toward basic and acidic residues: residues 208-224 (YDAK…RVGE) and 301-327 (PRAE…EYEQ). The SH2 domain maps to 395 to 490 (WYHGAISRAE…AEHMTLLYPV (96 aa)).

The chain is SH2 domain-containing adapter protein E (SHE) from Homo sapiens (Human).